The following is a 99-amino-acid chain: Large ribosomal subunit protein bL27 (99 aa).

The propeptide occupies 1–9 (MLIMNLQLF).

It belongs to the bacterial ribosomal protein bL27 family. Post-translationally, the N-terminus is cleaved by ribosomal processing cysteine protease Prp.

This is Large ribosomal subunit protein bL27 from Clostridium beijerinckii (strain ATCC 51743 / NCIMB 8052) (Clostridium acetobutylicum).